We begin with the raw amino-acid sequence, 184 residues long: Protein GrpE (184 aa).

The segment covering 1–10 (MSQETEKDLE) has biased composition (basic and acidic residues). A disordered region spans residues 1–38 (MSQETEKDLEQTQNEELVEEAQSDEKKDQEVDPVEAAQ).

Belongs to the GrpE family. Homodimer.

Its subcellular location is the cytoplasm. Its function is as follows. Participates actively in the response to hyperosmotic and heat shock by preventing the aggregation of stress-denatured proteins, in association with DnaK and GrpE. It is the nucleotide exchange factor for DnaK and may function as a thermosensor. Unfolded proteins bind initially to DnaJ; upon interaction with the DnaJ-bound protein, DnaK hydrolyzes its bound ATP, resulting in the formation of a stable complex. GrpE releases ADP from DnaK; ATP binding to DnaK triggers the release of the substrate protein, thus completing the reaction cycle. Several rounds of ATP-dependent interactions between DnaJ, DnaK and GrpE are required for fully efficient folding. This Sulfurovum sp. (strain NBC37-1) protein is Protein GrpE.